Reading from the N-terminus, the 241-residue chain is Copper transport protein CTR3 (241 aa).

The Lumenal segment spans residues 1–41 (MNMGGSSSTAAKKATCKISMLWNWYTIDTCFIARSWRNDTK). Residues 42–62 (GKFAGSCIGCFALVVVAQWLT) form a helical membrane-spanning segment. Residues 63 to 159 (RFSRQFDVEL…SCCTLITPVD (97 aa)) are Cytoplasmic-facing. Residues 160-180 (LYPTFLDHMIRVTIFVLQWGL) form a helical membrane-spanning segment. At 181–182 (SY) the chain is on the lumenal side. Residues 183 to 203 (IIMLLFMYYNGYIIISCLIGA) form a helical membrane-spanning segment. At 204-241 (IVGRFIFCYEPLGSLGANGSAQGTVSYDKESDDRKCCL) the chain is on the cytoplasmic side.

Belongs to the copper transporter (Ctr) (TC 1.A.56) family. SLC31A subfamily.

Its subcellular location is the cytoplasmic vesicle membrane. Required for high affinity copper (probably reduced Cu I) transport into the cell. The chain is Copper transport protein CTR3 (CTR3) from Saccharomyces cerevisiae (strain ATCC 204508 / S288c) (Baker's yeast).